The sequence spans 1400 residues: DNA-directed RNA polymerase subunit beta' (1400 aa).

Residues Cys71, Cys73, Cys86, and Cys89 each coordinate Zn(2+). 3 residues coordinate Mg(2+): Asp462, Asp464, and Asp466. The Zn(2+) site is built by Cys811, Cys885, Cys892, and Cys895.

Belongs to the RNA polymerase beta' chain family. The RNAP catalytic core consists of 2 alpha, 1 beta, 1 beta' and 1 omega subunit. When a sigma factor is associated with the core the holoenzyme is formed, which can initiate transcription. The cofactor is Mg(2+). Zn(2+) serves as cofactor.

It carries out the reaction RNA(n) + a ribonucleoside 5'-triphosphate = RNA(n+1) + diphosphate. Functionally, DNA-dependent RNA polymerase catalyzes the transcription of DNA into RNA using the four ribonucleoside triphosphates as substrates. In Brucella canis (strain ATCC 23365 / NCTC 10854 / RM-666), this protein is DNA-directed RNA polymerase subunit beta'.